Here is a 418-residue protein sequence, read N- to C-terminus: AA11 family lytic polysaccharide monooxygenase B (418 aa).

The signal sequence occupies residues 1–21; that stretch reads MMFSKSGLVAVAMLGASAVEA. Cu(+) is bound by residues His22 and His82. 3 disulfides stabilise this stretch: Cys50-Cys165, Cys87-Cys113, and Cys206-Cys240. 2 N-linked (GlcNAc...) asparagine glycosylation sites follow: Asn120 and Asn134. The disordered stretch occupies residues 226–345; the sequence is DGNPSNLQPA…SSSSSNGALT (120 aa). The span at 254–345 shows a compositional bias: low complexity; the sequence is SPSTPSTSSS…SSSSSNGALT (92 aa).

The protein belongs to the polysaccharide monooxygenase AA11 family. Cu(2+) is required as a cofactor.

It localises to the secreted. In terms of biological role, lytic polysaccharide monooxygenase (LPMO)-like protein that acts as a strict peroxygenase and does not catalyze a monooxygenase reaction. It is indeed hardly active on chitin, while being very active on soluble oligomers of N-acetylglucosamine. Cleaves the glycosidic bonds byoxidizing the C1 position. Also unable to oxidize cellopentaose. Probably breaks glycosidic bonds in non-polymeric substrates possibly carbohydrates in the cell wall of the fungus or its competitors. In the presence of chitotetraose, the enzyme can withstand considerable amounts of H(2)O(2), which it uses to efficiently and stoichiometrically convert this substrate. The chain is AA11 family lytic polysaccharide monooxygenase B from Aspergillus fumigatus (strain ATCC MYA-4609 / CBS 101355 / FGSC A1100 / Af293) (Neosartorya fumigata).